The following is a 194-amino-acid chain: Large ribosomal subunit protein bL9 (194 aa).

The disordered stretch occupies residues 167-194; that stretch reads EDRAAEAEAASDMAAGGAGSFEGDHYES.

Belongs to the bacterial ribosomal protein bL9 family.

Functionally, binds to the 23S rRNA. This is Large ribosomal subunit protein bL9 from Caulobacter sp. (strain K31).